The chain runs to 189 residues: GTPase NRas (189 aa).

Residues G10 to A18 and V29 to D30 contribute to the GTP site. The Effector region motif lies at Y32–Y40. D57 to Q61 contributes to the GTP binding site. S89 is modified (phosphoserine). Position 116–119 (N116–D119) interacts with GTP. Residues Y166–P185 form a hypervariable region region. A Glycyl lysine isopeptide (Lys-Gly) (interchain with G-Cter in ubiquitin) cross-link involves residue K170. A lipid anchor (S-palmitoyl cysteine) is attached at C181. C186 is lipidated: S-farnesyl cysteine. A propeptide spans V187–M189 (removed in mature form).

This sequence belongs to the small GTPase superfamily. Ras family. As to quaternary structure, interacts (active GTP-bound form preferentially) with RGS14. Interacts (active GTP-bound form) with RASSF7. Interacts (active GTP-bound form) with both SHOC2 and PP1c (all isoforms) to form a tertiary complex; SHOC2 and PP1c preferably bind M-Ras/MRAS, but they also bind K-Ras/KRAS, N-Ras/NRAS and H-Ras/HRAS. Palmitoylated by the ZDHHC9-GOLGA7 complex. Depalmitoylated by ABHD17A, ABHD17B and ABHD17C. A continuous cycle of de- and re-palmitoylation regulates rapid exchange between plasma membrane and Golgi. Post-translationally, acetylation at Lys-104 prevents interaction with guanine nucleotide exchange factors (GEFs). In terms of processing, ubiquitinated by the BCR(LZTR1) E3 ubiquitin ligase complex at Lys-170 in a non-degradative manner, leading to inhibit Ras signaling by decreasing Ras association with membranes. Phosphorylation at Ser-89 enhances NRAS association with its downstream effectors.

The protein resides in the cell membrane. It localises to the golgi apparatus membrane. The catalysed reaction is GTP + H2O = GDP + phosphate + H(+). Alternates between an inactive form bound to GDP and an active form bound to GTP. Activated by a guanine nucleotide-exchange factor (GEF) and inactivated by a GTPase-activating protein (GAP). In terms of biological role, ras proteins bind GDP/GTP and possess intrinsic GTPase activity. The sequence is that of GTPase NRas (NRAS) from Cavia porcellus (Guinea pig).